A 357-amino-acid polypeptide reads, in one-letter code: Membrane-bound lytic murein transglycosylase C (357 aa).

A signal peptide spans 1 to 15; the sequence is MKKYLLLALLPFLYA. The N-palmitoyl cysteine moiety is linked to residue Cys-16. A lipid anchor (S-diacylglycerol cysteine) is attached at Cys-16.

The protein belongs to the transglycosylase Slt family.

The protein localises to the cell outer membrane. The enzyme catalyses Exolytic cleavage of the (1-&gt;4)-beta-glycosidic linkage between N-acetylmuramic acid (MurNAc) and N-acetylglucosamine (GlcNAc) residues in peptidoglycan, from either the reducing or the non-reducing ends of the peptidoglycan chains, with concomitant formation of a 1,6-anhydrobond in the MurNAc residue.. In terms of biological role, murein-degrading enzyme. May play a role in recycling of muropeptides during cell elongation and/or cell division. The sequence is that of Membrane-bound lytic murein transglycosylase C from Haemophilus influenzae (strain PittEE).